A 242-amino-acid polypeptide reads, in one-letter code: DnaJ homolog subfamily B member 3 (242 aa).

In terms of domain architecture, J spans methionine 1–glycine 69.

Testis specific.

May operate as a co-chaperone of the male germ cell- and haploid stage-specific Hsp70 proteins. The sequence is that of DnaJ homolog subfamily B member 3 (DNAJB3) from Macaca fuscata fuscata (Japanese macaque).